We begin with the raw amino-acid sequence, 397 residues long: 3-hydroxybenzoate 6-hydroxylase (397 aa).

It belongs to the 3-hydroxybenzoate 6-hydroxylase family. As to quaternary structure, monomer. Requires FAD as cofactor.

The enzyme catalyses 3-hydroxybenzoate + NADH + O2 + H(+) = 2,5-dihydroxybenzoate + NAD(+) + H2O. Its activity is regulated as follows. Inhibited by copper, mercury and iron ions. Its function is as follows. Catalyzes the NAD- or NADP-dependent conversion of 3-hydroxybenzoate to gentisate. NAD and NADP function equally well. The protein is 3-hydroxybenzoate 6-hydroxylase (mhbM) of Klebsiella oxytoca.